Consider the following 335-residue polypeptide: Ornithine carbamoyltransferase (335 aa).

Carbamoyl phosphate is bound by residues 60-63 (STRT), Gln87, Arg111, and 138-141 (HPTQ). L-ornithine is bound by residues Asn171, Asp235, and 239–240 (SM). Residues 277–278 (CL) and Arg322 each bind carbamoyl phosphate.

The protein belongs to the aspartate/ornithine carbamoyltransferase superfamily. OTCase family.

Its subcellular location is the cytoplasm. It carries out the reaction carbamoyl phosphate + L-ornithine = L-citrulline + phosphate + H(+). Its pathway is amino-acid biosynthesis; L-arginine biosynthesis; L-arginine from L-ornithine and carbamoyl phosphate: step 1/3. In terms of biological role, reversibly catalyzes the transfer of the carbamoyl group from carbamoyl phosphate (CP) to the N(epsilon) atom of ornithine (ORN) to produce L-citrulline. This Streptomyces avermitilis (strain ATCC 31267 / DSM 46492 / JCM 5070 / NBRC 14893 / NCIMB 12804 / NRRL 8165 / MA-4680) protein is Ornithine carbamoyltransferase.